The sequence spans 492 residues: Cysteine--tRNA ligase (492 aa).

C27 is a binding site for Zn(2+). Residues V29–H39 carry the 'HIGH' region motif. Zn(2+)-binding residues include C211, H236, and E240. The short motif at K268 to S272 is the 'KMSKS' region element. Residue K271 participates in ATP binding.

This sequence belongs to the class-I aminoacyl-tRNA synthetase family. Monomer. Zn(2+) is required as a cofactor.

The protein localises to the cytoplasm. The catalysed reaction is tRNA(Cys) + L-cysteine + ATP = L-cysteinyl-tRNA(Cys) + AMP + diphosphate. The polypeptide is Cysteine--tRNA ligase (Prochlorococcus marinus (strain MIT 9515)).